Here is a 267-residue protein sequence, read N- to C-terminus: Regulatory protein VirG (267 aa).

Residues 29–143 enclose the Response regulatory domain; that stretch reads HVLLVDDDVA…EFLARIRVAL (115 aa). The residue at position 78 (D78) is a 4-aspartylphosphate. Positions 155-255 form a DNA-binding region, ompR/PhoB-type; it reads RRSFCFTDWT…ARGAGYFFDA (101 aa).

Phosphorylated by wide host range (WHR) VirA protein.

It is found in the cytoplasm. Its function is as follows. VirG is required for the positive regulation of at least two vir loci encoded by the Ti plasmid of A.tumefaciens. The sequence is that of Regulatory protein VirG (virG) from Agrobacterium tumefaciens (strain 15955).